Here is an 83-residue protein sequence, read N- to C-terminus: Cytochrome c oxidase subunit 7A2, mitochondrial (83 aa).

Residues 1 to 23 constitute a mitochondrion transit peptide; it reads MLRNLLALRQIAQRTISTTSRRH. At 24–48 the chain is on the mitochondrial matrix side; it reads FENKVPEKQKLFQEDNGMPVHLKGG. Residue Lys-33 is modified to N6-acetyllysine. Residues 49–77 form a helical membrane-spanning segment; it reads ASDALLYRATMALTLGGTAYAIYLLAMAA. Residues 78-83 lie on the Mitochondrial intermembrane side of the membrane; it reads FPKKQN.

Belongs to the cytochrome c oxidase VIIa family. Component of the cytochrome c oxidase (complex IV, CIV), a multisubunit enzyme composed of 14 subunits. The complex is composed of a catalytic core of 3 subunits MT-CO1, MT-CO2 and MT-CO3, encoded in the mitochondrial DNA, and 11 supernumerary subunits COX4I, COX5A, COX5B, COX6A, COX6B, COX6C, COX7A, COX7B, COX7C, COX8 and NDUFA4, which are encoded in the nuclear genome. The complex exists as a monomer or a dimer and forms supercomplexes (SCs) in the inner mitochondrial membrane with NADH-ubiquinone oxidoreductase (complex I, CI) and ubiquinol-cytochrome c oxidoreductase (cytochrome b-c1 complex, complex III, CIII), resulting in different assemblies (supercomplex SCI(1)III(2)IV(1) and megacomplex MCI(2)III(2)IV(2)). Interacts with PET100.

The protein localises to the mitochondrion inner membrane. Its pathway is energy metabolism; oxidative phosphorylation. Component of the cytochrome c oxidase, the last enzyme in the mitochondrial electron transport chain which drives oxidative phosphorylation. The respiratory chain contains 3 multisubunit complexes succinate dehydrogenase (complex II, CII), ubiquinol-cytochrome c oxidoreductase (cytochrome b-c1 complex, complex III, CIII) and cytochrome c oxidase (complex IV, CIV), that cooperate to transfer electrons derived from NADH and succinate to molecular oxygen, creating an electrochemical gradient over the inner membrane that drives transmembrane transport and the ATP synthase. Cytochrome c oxidase is the component of the respiratory chain that catalyzes the reduction of oxygen to water. Electrons originating from reduced cytochrome c in the intermembrane space (IMS) are transferred via the dinuclear copper A center (CU(A)) of subunit 2 and heme A of subunit 1 to the active site in subunit 1, a binuclear center (BNC) formed by heme A3 and copper B (CU(B)). The BNC reduces molecular oxygen to 2 water molecules using 4 electrons from cytochrome c in the IMS and 4 protons from the mitochondrial matrix. The chain is Cytochrome c oxidase subunit 7A2, mitochondrial (Cox7a2) from Mus musculus (Mouse).